A 227-amino-acid chain; its full sequence is Agamous-like MADS-box protein AGL8 homolog (227 aa).

One can recognise an MADS-box domain in the interval 3–57; sequence RGRVQLKRIENKINRQVTFSKRRSGLLKKAHEISVLCDAEVGLIVFSTKGKLFEY. In terms of domain architecture, K-box spans 88–178; the sequence is PVSWTLEHRK…SKKVKEREKS (91 aa).

Flower specific.

The protein localises to the nucleus. Its function is as follows. Probable transcription factor. The protein is Agamous-like MADS-box protein AGL8 homolog (TDR4) of Solanum lycopersicum (Tomato).